Consider the following 180-residue polypeptide: Endoribonuclease YbeY (180 aa).

The Zn(2+) site is built by His-118, His-122, and His-128.

Belongs to the endoribonuclease YbeY family. Requires Zn(2+) as cofactor.

It is found in the cytoplasm. Its function is as follows. Single strand-specific metallo-endoribonuclease involved in late-stage 70S ribosome quality control and in maturation of the 3' terminus of the 16S rRNA. The sequence is that of Endoribonuclease YbeY from Rhodococcus jostii (strain RHA1).